We begin with the raw amino-acid sequence, 257 residues long: UPF0246 protein ASA_3634 (257 aa).

This sequence belongs to the UPF0246 family.

This Aeromonas salmonicida (strain A449) protein is UPF0246 protein ASA_3634.